A 640-amino-acid chain; its full sequence is MALALKQRPSRFRPTTTTYEDNYGYTMNFYQPMLDYLDAKAKGLEVKKPHLPWVSERGLKQYRPSNAVRQYNADEIVRLSRTCAARADEILLNFRAQKRSPFSVQKLVDASRVTKHLEPDTVVERSRQRRRRRQEELEDLIKRDTLKILQRIRKIELDNELDKMSDDFKRSIRGKSASAIAQALLSESEKNIKTAKKEEEDYIAQTLVRSSRAVSRARSRSSSPLDGQYRAHALHIELMDDRLVDKLDHRVSSSLHNVKRQLSTLNQRTVEFYADSSKQTSIEIEQLNARVIEAETRLKTEVTRIKKKLQIQITELEMSLDVANKTNIDLQKVIKKQSLQLTELQAHYEDVQRQLQATLDQYAVAQRRLAGLNGELEEVRSHLDSANRAKRTVELQYEEAASRINELTTANVSLVSIKSKLEQELSVVASDYEEVSKELRISDERYQKVQVELKHVVEQVHEEQERIVKLETIKKSLEVEVKNLSIRLEEVELNAVAGSKRIISKLEARIRDLELELEEEKRRHAETIKILRKKERTVKEVLVQCEEDQKNLILLQDALDKSTAKINIYRRQLSEQEGVSQQTTTRVRRFQRELEAAEDRADTAESSLNIIRAKHRTFVTTSTVPGSQVYIQETTRTITE.

2 nonhelical region regions span residues 1 to 122 (MALA…PDTV) and 420 to 640 (KLEQ…TITE). Residues 123-619 (VERSRQRRRR…IIRAKHRTFV (497 aa)) are a coiled coil.

Belongs to the paramyosin family. In terms of processing, phosphorylated. In terms of tissue distribution, found in all adult muscle tissues except in indirect flight muscles and a set of temporary abdominal muscles. Not detected in larval muscle.

The protein localises to the cytoplasm. Its subcellular location is the myofibril. Functionally, paramyosin is a major structural component of many thick filaments isolated from invertebrate muscles. The sequence is that of Paramyosin, short form (Prm) from Drosophila melanogaster (Fruit fly).